Consider the following 209-residue polypeptide: Large ribosomal subunit protein uL3 (209 aa).

The interval 127 to 164 is disordered; the sequence is NFSGGQRTHGQSDRLRAPGSVGGASDPSRTFKGTKMGG.

The protein belongs to the universal ribosomal protein uL3 family. As to quaternary structure, part of the 50S ribosomal subunit. Forms a cluster with proteins L14 and L19.

One of the primary rRNA binding proteins, it binds directly near the 3'-end of the 23S rRNA, where it nucleates assembly of the 50S subunit. In Chlorobium phaeobacteroides (strain BS1), this protein is Large ribosomal subunit protein uL3.